The sequence spans 531 residues: 4-hydroxyphenylacetaldehyde oxime monooxygenase (531 aa).

The chain crosses the membrane as a helical span at residues 18–38; the sequence is WQTCLLVLLPVLLVSYYLLTS. Heme b-binding residues include Arg-122, Arg-151, Arg-466, and Cys-468.

Belongs to the cytochrome P450 family. Heme b serves as cofactor.

The protein resides in the endoplasmic reticulum membrane. It catalyses the reaction (E)-4-hydroxyphenylacetaldehyde oxime + reduced [NADPH--hemoprotein reductase] + O2 = (S)-4-hydroxymandelonitrile + oxidized [NADPH--hemoprotein reductase] + 2 H2O + H(+). It carries out the reaction (E)-4-hydroxyphenylacetaldehyde oxime = (Z)-(4-hydroxyphenyl)acetaldehyde oxime. The catalysed reaction is (Z)-(4-hydroxyphenyl)acetaldehyde oxime = 4-hydroxyphenylacetonitrile + H2O. The enzyme catalyses 4-hydroxyphenylacetonitrile + reduced [NADPH--hemoprotein reductase] + O2 = (S)-4-hydroxymandelonitrile + oxidized [NADPH--hemoprotein reductase] + H2O + H(+). The protein operates within secondary metabolite biosynthesis; dhurrin biosynthesis; dhurrin from L-tyrosine: step 2/3. In terms of biological role, cytochrome P450 involved in the biosynthesis of the cyanogenic glucoside dhurrin. Catalyzes the conversion of p-hydroxyphenylacetaldoxime to p-hydroxymandelonitrile via three different and successive activities: isomerization of the (E) isomer to the (Z) isomer of p-hydroxyphenylacetaldoxime, followed by dehydration of the oxime to the corresponding nitrile, and C-hydroxylation of the nitrile to produce p-hydroxymandelonitrile. The polypeptide is 4-hydroxyphenylacetaldehyde oxime monooxygenase (Sorghum bicolor (Sorghum)).